The chain runs to 371 residues: Protein-tyrosine sulfotransferase 2 (371 aa).

Residues Met1–Val8 lie on the Cytoplasmic side of the membrane. Residues Leu9–Gly25 form a helical; Signal-anchor for type II membrane protein membrane-spanning segment. Residues Gln26–His371 lie on the Lumenal side of the membrane. Arg76 to Thr80 is a binding site for 3'-phosphoadenylyl sulfate. A disulfide bond links Cys94 and Cys154. The active-site Proton donor/acceptor is Glu97. The tract at residues Arg99 to Arg103 is interaction with peptide substrate. 3'-phosphoadenylyl sulfate-binding residues include Arg181, Ser189, and Arg193. An intrachain disulfide couples Cys223 to Cys231. 3'-phosphoadenylyl sulfate is bound by residues Tyr236, Ser283 to Asn292, and Lys298. N-linked (GlcNAc...) asparagine glycans are attached at residues Asn341 and Asn366.

Belongs to the protein sulfotransferase family.

The protein resides in the golgi apparatus membrane. The catalysed reaction is L-tyrosyl-[protein] + 3'-phosphoadenylyl sulfate = O-sulfo-L-tyrosine-[protein] + adenosine 3',5'-bisphosphate + H(+). Its function is as follows. Catalyzes the O-sulfation of tyrosine residues within acidic motifs of polypeptides, using 3'-phosphoadenylyl sulfate (PAPS) as cosubstrate. The sequence is that of Protein-tyrosine sulfotransferase 2 (TPST2) from Gallus gallus (Chicken).